The sequence spans 610 residues: Isocitrate dehydrogenase kinase/phosphatase (610 aa).

ATP contacts are provided by residues 359 to 365 and Lys-380; that span reads APGFKGT. Asp-419 is a catalytic residue.

Belongs to the AceK family.

The protein resides in the cytoplasm. It catalyses the reaction L-seryl-[isocitrate dehydrogenase] + ATP = O-phospho-L-seryl-[isocitrate dehydrogenase] + ADP + H(+). Functionally, bifunctional enzyme which can phosphorylate or dephosphorylate isocitrate dehydrogenase (IDH) on a specific serine residue. This is a regulatory mechanism which enables bacteria to bypass the Krebs cycle via the glyoxylate shunt in response to the source of carbon. When bacteria are grown on glucose, IDH is fully active and unphosphorylated, but when grown on acetate or ethanol, the activity of IDH declines drastically concomitant with its phosphorylation. The sequence is that of Isocitrate dehydrogenase kinase/phosphatase from Rhodopseudomonas palustris (strain ATCC BAA-98 / CGA009).